Reading from the N-terminus, the 55-residue chain is Ribosome modulation factor (55 aa).

It belongs to the ribosome modulation factor family. As to quaternary structure, associates exclusively with 100S ribosomes.

The protein localises to the cytoplasm. Functionally, during stationary phase, converts 70S ribosomes to an inactive dimeric form (100S ribosomes). May form immature 90S particles, which are converted to mature 100S ribosomes by the hibernation promoting factor Hpf. The protein is Ribosome modulation factor of Escherichia coli O157:H7.